The sequence spans 488 residues: Calcium uniporter protein, mitochondrial (488 aa).

The transit peptide at 1-74 directs the protein to the mitochondrion; the sequence is MRALVSRTPI…RSFQLSASSR (74 aa). The disordered stretch occupies residues 65–117; the sequence is RSFQLSASSRDKRGPQSAEPDPLERLEVKKVQQQHENEKDDSGRDTKSGGKVA. The Mitochondrial matrix segment spans residues 75 to 339; it reads DKRGPQSAEP…ECDALAHRGA (265 aa). Basic and acidic residues predominate over residues 86–112; sequence PLERLEVKKVQQQHENEKDDSGRDTKS. Residues 340–361 form a helical membrane-spanning segment; that stretch reads QRVALGGFGILAFWWYIVYKLT. Residues 362-370 lie on the Mitochondrial intermembrane side of the membrane; the sequence is FETDLGWDT. The Selectivity filter signature appears at 368–376; it reads WDTMEPVTY. The chain crosses the membrane as a helical span at residues 371 to 391; sequence MEPVTYLVSLSTLMGGYLWFL. A Ca(2+)-binding site is contributed by glutamate 372. The Mitochondrial matrix segment spans residues 392 to 488; it reads YHNREISYRS…ERPKDDRDDD (97 aa). Residues 464-488 form a disordered region; sequence ALKKERRLKNGSQKEERPKDDRDDD. Positions 475–488 are enriched in basic and acidic residues; that stretch reads SQKEERPKDDRDDD.

This sequence belongs to the MCU (TC 1.A.77) family. In terms of assembly, homotetramer, assembles in a dimer or dimers configuration with two interfaces.

It localises to the mitochondrion inner membrane. The enzyme catalyses Ca(2+)(in) = Ca(2+)(out). Its activity is regulated as follows. Inhibited by ruthenium red or its derivative Ru360. Functionally, highly selective calcium channel localized to the inner mitochondrial membrane, which mediates calcium uptake into the mitochondrial matrix. Mitochondrial calcium homeostasis plays key roles in cellular physiology and regulates ATP production, cytoplasmic calcium signals and activation of cell death pathways. Sufficient to operate as a pore-forming channel without the need of calcium-sensor or auxiliary subunit. In Neosartorya fischeri (strain ATCC 1020 / DSM 3700 / CBS 544.65 / FGSC A1164 / JCM 1740 / NRRL 181 / WB 181) (Aspergillus fischerianus), this protein is Calcium uniporter protein, mitochondrial.